We begin with the raw amino-acid sequence, 766 residues long: Dolichyl pyrophosphate Glc1Man9GlcNAc2 alpha-1,3-glucosyltransferase (766 aa).

Transmembrane regions (helical) follow at residues 6–26 (LVLAVTAILISFKCLLIPAYV), 60–80 (YPPFFAYFELGLASVAHFFGF), 96–116 (ILIFQRFSVIFCDILYIAVCA), 156–176 (SIHFQYNSMLTAIFLMSLFFI), 190–210 (ILLNFKHIYVYYALGYVFYYL), 228–248 (AISLAIALLIPFCASIFPFIH), 324–344 (PMGTLCLVVISSMIVLTGLVI), 350–370 (ADFSLFAVFSAFCFFYFGYHV), 395–415 (ILIHLTCIASFSLFPLLFTPF), 423–443 (ICVSYFFIQLVFLKRVTLMPL), 452–472 (VASWLLMGMVEVYNTFLHKWL), and 482–502 (LMAISILTAIELTGLIGALIW).

It belongs to the ALG6/ALG8 glucosyltransferase family.

The protein resides in the endoplasmic reticulum membrane. The catalysed reaction is an alpha-D-Glc-(1-&gt;3)-alpha-D-Man-(1-&gt;2)-alpha-D-Man-(1-&gt;2)-alpha-D-Man-(1-&gt;3)-[alpha-D-Man-(1-&gt;2)-alpha-D-Man-(1-&gt;3)-[alpha-D-Man-(1-&gt;2)-alpha-D-Man-(1-&gt;6)]-alpha-D-Man-(1-&gt;6)]-beta-D-Man-(1-&gt;4)-beta-D-GlcNAc-(1-&gt;4)-alpha-D-GlcNAc-diphospho-di-trans,poly-cis-dolichol + a di-trans,poly-cis-dolichyl beta-D-glucosyl phosphate = an alpha-D-Glc-(1-&gt;3)-alpha-D-Glc-(1-&gt;3)-alpha-D-Man-(1-&gt;2)-alpha-D-Man-(1-&gt;2)-alpha-D-Man-(1-&gt;3)-[alpha-D-Man-(1-&gt;2)-alpha-D-Man-(1-&gt;3)-[alpha-D-Man-(1-&gt;2)-alpha-D-Man-(1-&gt;6)]-alpha-D-Man-(1-&gt;6)]-beta-D-Man-(1-&gt;4)-beta-D-GlcNAc-(1-&gt;4)-alpha-D-GlcNAc-diphospho-di-trans,poly-cis-dolichol + a di-trans,poly-cis-dolichyl phosphate + H(+). It functions in the pathway protein modification; protein glycosylation. Dolichyl pyrophosphate Glc1Man9GlcNAc2 alpha-1,3-glucosyltransferase that operates in the biosynthetic pathway of dolichol-linked oligosaccharides, the glycan precursors employed in protein asparagine (N)-glycosylation. The assembly of dolichol-linked oligosaccharides begins on the cytosolic side of the endoplasmic reticulum membrane and finishes in its lumen. The sequential addition of sugars to dolichol pyrophosphate produces dolichol-linked oligosaccharides containing fourteen sugars, including two GlcNAcs, nine mannoses and three glucoses. Once assembled, the oligosaccharide is transferred from the lipid to nascent proteins by oligosaccharyltransferases. In the lumen of the endoplasmic reticulum, adds the second glucose residue from dolichyl phosphate glucose (Dol-P-Glc) onto the lipid-linked oligosaccharide intermediate Glc(1)Man(9)GlcNAc(2)-PP-Dol to produce Glc(2)Man(9)GlcNAc(2)-PP-Dol. The protein is Dolichyl pyrophosphate Glc1Man9GlcNAc2 alpha-1,3-glucosyltransferase of Caenorhabditis elegans.